A 348-amino-acid polypeptide reads, in one-letter code: Heat-inducible transcription repressor HrcA (348 aa).

Belongs to the HrcA family.

In terms of biological role, negative regulator of class I heat shock genes (grpE-dnaK-dnaJ and groELS operons). Prevents heat-shock induction of these operons. The chain is Heat-inducible transcription repressor HrcA from Pelotomaculum thermopropionicum (strain DSM 13744 / JCM 10971 / SI).